Reading from the N-terminus, the 277-residue chain is Pristinamycin IIA synthase subunit B (277 aa).

As to quaternary structure, heterodimer of two subunits, SnaA and SnaB. The cofactor is FMN.

Its function is as follows. Catalyzes the oxidation of the proline residue of pristinamycin IIB (PIIB) to pristinamycin IIA (PIIA). This is Pristinamycin IIA synthase subunit B (snaB) from Streptomyces pristinaespiralis.